The following is a 348-amino-acid chain: MRSLPFALTVESVSARAPTCCSTGRFTQGRQPCKCKACGRGFTQSASLLQHWRVHSDWRETLSLSPVRQDLLWPLQPHQAPASPLGRSHSSAGVRQGFSGQLCCWLTKEHTLAEALRLSPVPAGFWGPVEADRPPANSHRRVCPFCCCSCGDSVNEKTSLSQRVLPHPGEKTCRGGSVESVSLAPSSVAPDSTSGLRPCGSPGSFLQHLPPSTLLPRPPFLYPGPPLSLQPLVPSGLPAVPAVPLGGLEVAQVPPATQPAAQQEGAMGPRSCASAGRDSREAVQAPGYPEPARKASQHRAAGPLGEARARLQRQCRAPPPPSNPHWRGALPVFPVWKASSRRSNLARH.

Residues 33-55 (CKCKACGRGFTQSASLLQHWRVH) form a C2H2-type 1 zinc finger. The C2H2-type 2; degenerate zinc-finger motif lies at 145-167 (FCCCSCGDSVNEKTSLSQRVLPH). Over residues 184–195 (APSSVAPDSTSG) the composition is skewed to polar residues. Disordered regions lie at residues 184-203 (APSS…GSPG) and 256-329 (ATQP…WRGA).

This is Zinc finger protein 843 (ZNF843) from Homo sapiens (Human).